The following is a 279-amino-acid chain: Putative pyruvate, phosphate dikinase regulatory protein (279 aa).

Residue 152-159 (GVSRTSKS) coordinates ADP.

This sequence belongs to the pyruvate, phosphate/water dikinase regulatory protein family. PDRP subfamily.

The enzyme catalyses N(tele)-phospho-L-histidyl/L-threonyl-[pyruvate, phosphate dikinase] + ADP = N(tele)-phospho-L-histidyl/O-phospho-L-threonyl-[pyruvate, phosphate dikinase] + AMP + H(+). The catalysed reaction is N(tele)-phospho-L-histidyl/O-phospho-L-threonyl-[pyruvate, phosphate dikinase] + phosphate + H(+) = N(tele)-phospho-L-histidyl/L-threonyl-[pyruvate, phosphate dikinase] + diphosphate. Functionally, bifunctional serine/threonine kinase and phosphorylase involved in the regulation of the pyruvate, phosphate dikinase (PPDK) by catalyzing its phosphorylation/dephosphorylation. The sequence is that of Putative pyruvate, phosphate dikinase regulatory protein from Anaplasma marginale (strain Florida).